Reading from the N-terminus, the 402-residue chain is Serine/threonine transporter SstT (402 aa).

The next 9 helical transmembrane spans lie at 19–39 (IGVV…AIGL), 43–63 (LFVG…VISA), 86–106 (TFAA…TLIL), 138–158 (AITE…GLAM), 179–199 (VVKW…FTSI), 212–232 (LLIL…NPII), 287–307 (IPLG…ILTL), 327–347 (VVAA…LLLI), and 354–374 (FGIS…VGVI).

The protein belongs to the dicarboxylate/amino acid:cation symporter (DAACS) (TC 2.A.23) family.

It is found in the cell membrane. It carries out the reaction L-serine(in) + Na(+)(in) = L-serine(out) + Na(+)(out). The catalysed reaction is L-threonine(in) + Na(+)(in) = L-threonine(out) + Na(+)(out). Its function is as follows. Involved in the import of serine and threonine into the cell, with the concomitant import of sodium (symport system). This is Serine/threonine transporter SstT from Streptococcus agalactiae serotype III (strain NEM316).